The sequence spans 225 residues: 2-C-methyl-D-erythritol 4-phosphate cytidylyltransferase (225 aa).

It belongs to the IspD/TarI cytidylyltransferase family. IspD subfamily.

The enzyme catalyses 2-C-methyl-D-erythritol 4-phosphate + CTP + H(+) = 4-CDP-2-C-methyl-D-erythritol + diphosphate. The protein operates within isoprenoid biosynthesis; isopentenyl diphosphate biosynthesis via DXP pathway; isopentenyl diphosphate from 1-deoxy-D-xylulose 5-phosphate: step 2/6. Its function is as follows. Catalyzes the formation of 4-diphosphocytidyl-2-C-methyl-D-erythritol from CTP and 2-C-methyl-D-erythritol 4-phosphate (MEP). The sequence is that of 2-C-methyl-D-erythritol 4-phosphate cytidylyltransferase from Clostridium perfringens (strain ATCC 13124 / DSM 756 / JCM 1290 / NCIMB 6125 / NCTC 8237 / Type A).